The chain runs to 126 residues: Aspartate 1-decarboxylase 1 (126 aa).

The Schiff-base intermediate with substrate; via pyruvic acid role is filled by serine 25. Residue serine 25 is modified to Pyruvic acid (Ser). Threonine 57 serves as a coordination point for substrate. Tyrosine 58 acts as the Proton donor in catalysis. 73–75 is a substrate binding site; it reads GSA.

This sequence belongs to the PanD family. Heterooctamer of four alpha and four beta subunits. Requires pyruvate as cofactor. Is synthesized initially as an inactive proenzyme, which is activated by self-cleavage at a specific serine bond to produce a beta-subunit with a hydroxyl group at its C-terminus and an alpha-subunit with a pyruvoyl group at its N-terminus.

It localises to the cytoplasm. The enzyme catalyses L-aspartate + H(+) = beta-alanine + CO2. It functions in the pathway cofactor biosynthesis; (R)-pantothenate biosynthesis; beta-alanine from L-aspartate: step 1/1. Functionally, catalyzes the pyruvoyl-dependent decarboxylation of aspartate to produce beta-alanine. This Polaromonas sp. (strain JS666 / ATCC BAA-500) protein is Aspartate 1-decarboxylase 1.